The sequence spans 222 residues: Histidinol-phosphatase (222 aa).

The Nucleophile role is filled by Asp8. Asp8, Asp10, and Asp184 together coordinate Mg(2+). The active-site Proton donor is Asp10.

It belongs to the HAD-like hydrolase superfamily. SerB family. Mg(2+) serves as cofactor.

The enzyme catalyses L-histidinol phosphate + H2O = L-histidinol + phosphate. It functions in the pathway amino-acid biosynthesis; L-histidine biosynthesis; L-histidine from 5-phospho-alpha-D-ribose 1-diphosphate: step 8/9. Its function is as follows. Catalyzes the dephosphorylation of histidinol-phosphate to histidinol, the direct precursor of histidine. The polypeptide is Histidinol-phosphatase (Neisseria meningitidis serogroup C (strain 8013)).